Reading from the N-terminus, the 148-residue chain is MLRYAVIACAALVVFAGALEFSDCGSKTGKFTRVAIEGCDTTKAECILKRNTTVSFSIDFALAEEATAVKTVVHGKVLGIEMPFPLANPDACVDSGLKCPLEKDESYRYTATLPVLRSYPKVSVLVKWELQDQDGADIICVEIPAKIQ.

The N-terminal stretch at 1–16 (MLRYAVIACAALVVFA) is a signal peptide. 3 disulfide bridges follow: Cys24-Cys140, Cys39-Cys46, and Cys92-Cys99. N-linked (GlcNAc...) asparagine glycosylation is present at Asn51.

This sequence belongs to the NPC2 family. Broadly expressed with a higher level of expression in many tissues, including midgut, salivary gland and ventral nerve cord.

It localises to the secreted. Functionally, functions redundantly with Npc2b in regulating sterol homeostasis and ecdysteroid biosynthesis, probably by controlling the availability of sterol substrate. The sequence is that of NPC intracellular cholesterol transporter 2 homolog a from Drosophila melanogaster (Fruit fly).